A 324-amino-acid chain; its full sequence is Glyoxylate/hydroxypyruvate reductase B (324 aa).

Residues R237 and E266 contribute to the active site. H285 functions as the Proton donor in the catalytic mechanism.

It belongs to the D-isomer specific 2-hydroxyacid dehydrogenase family. GhrB subfamily. In terms of assembly, homodimer.

The protein localises to the cytoplasm. The catalysed reaction is glycolate + NADP(+) = glyoxylate + NADPH + H(+). It catalyses the reaction (R)-glycerate + NAD(+) = 3-hydroxypyruvate + NADH + H(+). It carries out the reaction (R)-glycerate + NADP(+) = 3-hydroxypyruvate + NADPH + H(+). Its function is as follows. Catalyzes the NADPH-dependent reduction of glyoxylate and hydroxypyruvate into glycolate and glycerate, respectively. This is Glyoxylate/hydroxypyruvate reductase B from Salmonella typhi.